Here is a 639-residue protein sequence, read N- to C-terminus: Carbon monoxide dehydrogenase (639 aa).

Cysteine 41, cysteine 49, cysteine 50, cysteine 53, cysteine 58, and cysteine 72 together coordinate [4Fe-4S] cluster. Residues histidine 265, cysteine 300, cysteine 338, cysteine 451, cysteine 481, and cysteine 531 each contribute to the [Ni-4Fe-4S] cluster site.

This sequence belongs to the Ni-containing carbon monoxide dehydrogenase family. As to quaternary structure, homodimer. Requires [4Fe-4S] cluster as cofactor. [Ni-4Fe-4S] cluster is required as a cofactor.

It localises to the cytoplasm. Its subcellular location is the cell inner membrane. The enzyme catalyses CO + 2 oxidized [2Fe-2S]-[ferredoxin] + H2O = 2 reduced [2Fe-2S]-[ferredoxin] + CO2 + 2 H(+). In terms of biological role, allows growth in a CO-dependent manner in the dark. CODH oxidizes carbon monoxide coupled, via CooF, to the reduction of a hydrogen cation by a hydrogenase (possibly CooH). The chain is Carbon monoxide dehydrogenase (cooS) from Rhodospirillum rubrum.